A 433-amino-acid chain; its full sequence is Serine hydroxymethyltransferase (433 aa).

(6S)-5,6,7,8-tetrahydrofolate is bound by residues leucine 132 and 136–138 (GHL). At lysine 241 the chain carries N6-(pyridoxal phosphate)lysine.

It belongs to the SHMT family. In terms of assembly, homodimer. It depends on pyridoxal 5'-phosphate as a cofactor.

It is found in the cytoplasm. It carries out the reaction (6R)-5,10-methylene-5,6,7,8-tetrahydrofolate + glycine + H2O = (6S)-5,6,7,8-tetrahydrofolate + L-serine. It participates in one-carbon metabolism; tetrahydrofolate interconversion. The protein operates within amino-acid biosynthesis; glycine biosynthesis; glycine from L-serine: step 1/1. Its function is as follows. Catalyzes the reversible interconversion of serine and glycine with tetrahydrofolate (THF) serving as the one-carbon carrier. This reaction serves as the major source of one-carbon groups required for the biosynthesis of purines, thymidylate, methionine, and other important biomolecules. Also exhibits THF-independent aldolase activity toward beta-hydroxyamino acids, producing glycine and aldehydes, via a retro-aldol mechanism. This Rhodopseudomonas palustris (strain BisA53) protein is Serine hydroxymethyltransferase.